Consider the following 662-residue polypeptide: F-box/WD repeat-containing protein pof10 (662 aa).

Residues 1-16 (MKSEPTSLDFTSSNLR) show a composition bias toward polar residues. The disordered stretch occupies residues 1-27 (MKSEPTSLDFTSSNLRRMNRDHSSNNT). Residues 28-74 (NRTVLNLPKEILIIIFSFLDPRSLLSAQCTCKYWKKLLSDDLSWRTA) enclose the F-box domain. WD repeat units follow at residues 215 to 260 (SHAD…SLQS), 263 to 302 (FRSS…GYAR), and 429 to 468 (TAYS…FLKK). The 20-residue stretch at 581–600 (SEEEIIAYVTMLSQEEEAKR) folds into the UIM 1 domain. Residues 617–645 (ENDEQATSSLNALSSNHEPPQEQANVAEL) form a disordered region. The segment covering 621-640 (QATSSLNALSSNHEPPQEQA) has biased composition (polar residues). The 17-residue stretch at 646–662 (NEQEQIELAMRLSLMEM) folds into the UIM 2 domain.

Part of a SCF (SKP1-cullin-F-box) protein ligase complex. Interacts with skp1.

Its subcellular location is the cytoplasm. In terms of biological role, probably recognizes and binds to some phosphorylated proteins and promotes their ubiquitination and degradation. This Schizosaccharomyces pombe (strain 972 / ATCC 24843) (Fission yeast) protein is F-box/WD repeat-containing protein pof10 (pof10).